Consider the following 164-residue polypeptide: UPF0304 protein HSM_1818 (164 aa).

It belongs to the UPF0304 family.

The protein is UPF0304 protein HSM_1818 of Histophilus somni (strain 2336) (Haemophilus somnus).